A 409-amino-acid chain; its full sequence is MSAPAPVVVTGLGIVAPNGTGTEEYWAATLAGKSGIDVIQRFDPHGYPVRVGGEVLAFDAAAHLPGRLLPQTDRMTQHALVAAEWALADAGLEPEKQDEYGLGVLTAAGAGGFEFGQREMQKLWGTGPERVSAYQSFAWFYAVNTGQISIRHGMRGHSSVFVTEQAGGLDAAAHAARLLRKGTLNTALTGGCEASLCPWGLVAQIPSGFLSEATDPHDAYLPFDARAAGYVPGEGGAMLVAERADSARERDAATVYGRIAGHASTFDARPGTGRPTGPARAIRLALEEARVAPEDVDVVYADAAGVPALDRAEAEALAEVFGPGAVPVTAPKTMTGRLYAGGAALDVATALLSIRDCVVPPTVGTGAPAPGLGIDLVLHQPRELRVDTALVVARGMGGFNSALVVRRHG.

Residues 4 to 407 (PAPVVVTGLG…GFNSALVVRR (404 aa)) form the Ketosynthase family 3 (KS3) domain.

Belongs to the thiolase-like superfamily. Beta-ketoacyl-ACP synthases family. The tetracenomycin polyketide synthase (TCM PKS) is composed of a ketosynthase complex (TcmKL), an acyl carrier protein (TcmM), a cyclase (TcmN) and a probable second cyclase (TcmJ). TcmK and TcmL form a heterodimeric complex.

It carries out the reaction 10 malonyl-CoA + 8 H(+) = tetracenomycin F2 + 10 CO2 + 10 CoA + 2 H2O. The protein operates within antibiotic biosynthesis; tetracenomycin C biosynthesis. In terms of biological role, involved in the biosynthesis of tetracenomycin C (TCM C). Part of a type II polyketide synthase (PKS) that catalyzes the synthesis of tetracenomycin F2 (TCM F2), a precursor of TCM C, from malonyl-CoA. TcmK and TcmL form a heterodimeric alpha-beta complex that catalyzes the condensation reactions between the growing acyl-enzyme chain and the malonyl-CoA extender units. This is Tetracenomycin polyketide synthase ketoacyl synthase beta subunit from Streptomyces glaucescens.